Here is an 833-residue protein sequence, read N- to C-terminus: Leucine--tRNA ligase (833 aa).

The short motif at 41–52 is the 'HIGH' region element; sequence PYPSGAGLHVGH. A 'KMSKS' region motif is present at residues 610–614; it reads KMSKS. Residue lysine 613 coordinates ATP.

It belongs to the class-I aminoacyl-tRNA synthetase family.

The protein resides in the cytoplasm. It carries out the reaction tRNA(Leu) + L-leucine + ATP = L-leucyl-tRNA(Leu) + AMP + diphosphate. The polypeptide is Leucine--tRNA ligase (Streptococcus pyogenes serotype M12 (strain MGAS2096)).